We begin with the raw amino-acid sequence, 227 residues long: Aspartyl protease inhibitor (227 aa).

Positions 1-15 (MKLVVLCVLCGIALA) are cleaved as a signal peptide. Positions 88–109 (SLKSRMAGKKEKAVTPKEEDLP) are enriched in basic and acidic residues. The interval 88 to 116 (SLKSRMAGKKEKAVTPKEEDLPKAPQKPS) is disordered. A disulfide bond links Cys-131 and Cys-223.

Belongs to the protease inhibitor I33 family.

The protein localises to the secreted. Its function is as follows. Aspartyl protease inhibitor. This Ostertagia ostertagi (Brown stomach worm) protein is Aspartyl protease inhibitor (API).